Consider the following 632-residue polypeptide: DNA mismatch repair protein MutL (632 aa).

This sequence belongs to the DNA mismatch repair MutL/HexB family.

This protein is involved in the repair of mismatches in DNA. It is required for dam-dependent methyl-directed DNA mismatch repair. May act as a 'molecular matchmaker', a protein that promotes the formation of a stable complex between two or more DNA-binding proteins in an ATP-dependent manner without itself being part of a final effector complex. The protein is DNA mismatch repair protein MutL of Pseudomonas putida (strain GB-1).